The sequence spans 1088 residues: RNA-directed RNA polymerase (1088 aa).

The RdRp catalytic domain maps to 501 to 687 (LSYGDVTRFL…AKRYIAGGKI (187 aa)).

This sequence belongs to the reoviridae RNA-directed RNA polymerase family. In terms of assembly, interacts with VP3 (Potential). Interacts with VP2; this interaction activates VP1. Interacts with NSP5; this interaction is probably necessary for the formation of functional virus factories. Interacts with NSP2; this interaction is weak. It depends on Mg(2+) as a cofactor.

It localises to the virion. It catalyses the reaction RNA(n) + a ribonucleoside 5'-triphosphate = RNA(n+1) + diphosphate. In terms of biological role, RNA-directed RNA polymerase that is involved in both transcription and genome replication. Together with VP3 capping enzyme, forms an enzyme complex positioned near the channels situated at each of the five-fold vertices of the core. Following infection, the outermost layer of the virus is lost, leaving a double-layered particle (DLP) made up of the core and VP6 shell. VP1 then catalyzes the transcription of fully conservative plus-strand genomic RNAs that are extruded through the DLP's channels into the cytoplasm where they function as mRNAs for translation of viral proteins. One copy of each of the viral (+)RNAs is also recruited during core assembly, together with newly synthesized polymerase complexes and VP2. The polymerase of these novo-formed particles catalyzes the synthesis of complementary minus-strands leading to dsRNA formation. To do so, the polymerase specifically recognizes and binds 4 bases 5'-UGUG-3' in the conserved 3'-sequence of plus-strand RNA templates. VP2 presumably activates the autoinhibited VP1-RNA complex to coordinate packaging and genome replication. Once dsRNA synthesis is complete, the polymerase switches to the transcriptional mode, thus providing secondary transcription. The sequence is that of RNA-directed RNA polymerase from Homo sapiens (Human).